We begin with the raw amino-acid sequence, 115 residues long: NADH-ubiquinone oxidoreductase chain 3 (115 aa).

The next 3 membrane-spanning stretches (helical) occupy residues 4-24, 55-75, and 87-107; these read FMAL…AFWL, FFLV…LLPL, and MMLT…YEWV.

Belongs to the complex I subunit 3 family. As to quaternary structure, core subunit of respiratory chain NADH dehydrogenase (Complex I) which is composed of 45 different subunits. Interacts with TMEM186. Interacts with TMEM242.

The protein localises to the mitochondrion inner membrane. It catalyses the reaction a ubiquinone + NADH + 5 H(+)(in) = a ubiquinol + NAD(+) + 4 H(+)(out). In terms of biological role, core subunit of the mitochondrial membrane respiratory chain NADH dehydrogenase (Complex I) which catalyzes electron transfer from NADH through the respiratory chain, using ubiquinone as an electron acceptor. Essential for the catalytic activity of complex I. The sequence is that of NADH-ubiquinone oxidoreductase chain 3 from Osgoodomys banderanus (Michoacan deer mouse).